The primary structure comprises 206 residues: MTEDKKTIPEEQVEAEQVVVEEVEAELVENDESAQPQEEAEASNEDLNMIEVLNKKLALAEQQIVDQQADVARAQADVVNARRIAAQDVQKAHKFALVKFADGLLPVIDSLEMAISHADKEDETLKPMIEGVELTLKSMLDTVDKFGLKVIDPKDEAFDPEKHQAMSMRAVPDVAPNQVIAVMQKGYELNGRVIRPAMVMVSKAED.

This sequence belongs to the GrpE family. As to quaternary structure, homodimer.

The protein resides in the cytoplasm. Functionally, participates actively in the response to hyperosmotic and heat shock by preventing the aggregation of stress-denatured proteins, in association with DnaK and GrpE. It is the nucleotide exchange factor for DnaK and may function as a thermosensor. Unfolded proteins bind initially to DnaJ; upon interaction with the DnaJ-bound protein, DnaK hydrolyzes its bound ATP, resulting in the formation of a stable complex. GrpE releases ADP from DnaK; ATP binding to DnaK triggers the release of the substrate protein, thus completing the reaction cycle. Several rounds of ATP-dependent interactions between DnaJ, DnaK and GrpE are required for fully efficient folding. This is Protein GrpE from Psychromonas ingrahamii (strain DSM 17664 / CCUG 51855 / 37).